The following is a 142-amino-acid chain: Mini-ribonuclease 3 (142 aa).

Asp33 is a catalytic residue.

Belongs to the MrnC RNase family. In terms of assembly, homodimer. Mg(2+) serves as cofactor.

The protein resides in the cytoplasm. In terms of biological role, involved in correct processing of both the 5' and 3' ends of 23S rRNA precursor. Processes 30S rRNA precursor transcript even in absence of ribonuclease 3 (Rnc); Rnc processes 30S rRNA into smaller rRNA precursors. This chain is Mini-ribonuclease 3, found in Thermoanaerobacter sp. (strain X514).